The chain runs to 480 residues: tRNA-2-methylthio-N(6)-dimethylallyladenosine synthase (480 aa).

The region spanning 2-118 is the MTTase N-terminal domain; that stretch reads NRVHIKTYGC…VPGYLDNLRA (117 aa). [4Fe-4S] cluster contacts are provided by Cys-11, Cys-47, and Cys-81. A disordered region spans residues 145 to 169; sequence DHLLPQDSDSDSQPSTLNSQLRGAA. The segment covering 149–159 has biased composition (low complexity); the sequence is PQDSDSDSQPS. A Radical SAM core domain is found at 171 to 405; the sequence is PPPQITAFVS…LELLRQNSER (235 aa). 3 residues coordinate [4Fe-4S] cluster: Cys-185, Cys-189, and Cys-192. One can recognise a TRAM domain in the interval 408–470; it reads ALLLDTVEEV…VSTLYGELML (63 aa).

The protein belongs to the methylthiotransferase family. MiaB subfamily. In terms of assembly, monomer. [4Fe-4S] cluster is required as a cofactor.

The protein localises to the cytoplasm. The catalysed reaction is N(6)-dimethylallyladenosine(37) in tRNA + (sulfur carrier)-SH + AH2 + 2 S-adenosyl-L-methionine = 2-methylsulfanyl-N(6)-dimethylallyladenosine(37) in tRNA + (sulfur carrier)-H + 5'-deoxyadenosine + L-methionine + A + S-adenosyl-L-homocysteine + 2 H(+). Its function is as follows. Catalyzes the methylthiolation of N6-(dimethylallyl)adenosine (i(6)A), leading to the formation of 2-methylthio-N6-(dimethylallyl)adenosine (ms(2)i(6)A) at position 37 in tRNAs that read codons beginning with uridine. In Opitutus terrae (strain DSM 11246 / JCM 15787 / PB90-1), this protein is tRNA-2-methylthio-N(6)-dimethylallyladenosine synthase.